Here is a 259-residue protein sequence, read N- to C-terminus: Imidazole glycerol phosphate synthase subunit HisF (259 aa).

Active-site residues include Asp-11 and Asp-130.

It belongs to the HisA/HisF family. Heterodimer of HisH and HisF.

The protein resides in the cytoplasm. The catalysed reaction is 5-[(5-phospho-1-deoxy-D-ribulos-1-ylimino)methylamino]-1-(5-phospho-beta-D-ribosyl)imidazole-4-carboxamide + L-glutamine = D-erythro-1-(imidazol-4-yl)glycerol 3-phosphate + 5-amino-1-(5-phospho-beta-D-ribosyl)imidazole-4-carboxamide + L-glutamate + H(+). It functions in the pathway amino-acid biosynthesis; L-histidine biosynthesis; L-histidine from 5-phospho-alpha-D-ribose 1-diphosphate: step 5/9. In terms of biological role, IGPS catalyzes the conversion of PRFAR and glutamine to IGP, AICAR and glutamate. The HisF subunit catalyzes the cyclization activity that produces IGP and AICAR from PRFAR using the ammonia provided by the HisH subunit. This is Imidazole glycerol phosphate synthase subunit HisF from Chloroflexus aurantiacus (strain ATCC 29366 / DSM 635 / J-10-fl).